Reading from the N-terminus, the 604-residue chain is uncharacterized protein (604 aa).

A disordered region spans residues 239–259 (ELNSPQELNDPQELNNSQDLN).

This is an uncharacterized protein from Escherichia coli (strain K12).